The sequence spans 464 residues: Arylsulfatase (464 aa).

The N-terminal stretch at 1 to 20 (MNKKAMAAAVSMILAGGAHA) is a signal peptide. Ca(2+) contacts are provided by Asp-34, Asp-35, and Ser-72. Catalysis depends on Ser-72, which acts as the Nucleophile. 3-oxoalanine (Ser) is present on Ser-72. The active site involves His-134. Ca(2+)-binding residues include Asp-329 and Asn-330.

The protein belongs to the sulfatase family. Ca(2+) serves as cofactor. Post-translationally, the conversion to 3-oxoalanine (also known as C-formylglycine, FGly), of a serine or cysteine residue in prokaryotes and of a cysteine residue in eukaryotes, is critical for catalytic activity.

The protein localises to the periplasm. It catalyses the reaction an aryl sulfate + H2O = a phenol + sulfate + H(+). Its function is as follows. Plays an important role in the mineralization of sulfates. The sequence is that of Arylsulfatase (atsA) from Klebsiella aerogenes (Enterobacter aerogenes).